The primary structure comprises 191 residues: 3-isopropylmalate dehydratase small subunit (191 aa).

Belongs to the LeuD family. LeuD type 1 subfamily. In terms of assembly, heterodimer of LeuC and LeuD.

The catalysed reaction is (2R,3S)-3-isopropylmalate = (2S)-2-isopropylmalate. It participates in amino-acid biosynthesis; L-leucine biosynthesis; L-leucine from 3-methyl-2-oxobutanoate: step 2/4. In terms of biological role, catalyzes the isomerization between 2-isopropylmalate and 3-isopropylmalate, via the formation of 2-isopropylmaleate. The sequence is that of 3-isopropylmalate dehydratase small subunit from Staphylococcus haemolyticus (strain JCSC1435).